A 91-amino-acid polypeptide reads, in one-letter code: Acylphosphatase (91 aa).

Residues 5-91 (RAHVFVSGRV…EGVDGFEVRW (87 aa)) form the Acylphosphatase-like domain. Residues arginine 20 and asparagine 38 contribute to the active site.

It belongs to the acylphosphatase family.

The enzyme catalyses an acyl phosphate + H2O = a carboxylate + phosphate + H(+). The sequence is that of Acylphosphatase (acyP) from Haloarcula marismortui (strain ATCC 43049 / DSM 3752 / JCM 8966 / VKM B-1809) (Halobacterium marismortui).